The primary structure comprises 250 residues: Copper homeostasis protein cutC homolog (250 aa).

This sequence belongs to the CutC family.

Functionally, involved in copper homeostasis. Affects body morphology and length, egg laying and brood size. This is Copper homeostasis protein cutC homolog (cutc-1) from Caenorhabditis elegans.